The primary structure comprises 483 residues: Proline--tRNA ligase (483 aa).

This sequence belongs to the class-II aminoacyl-tRNA synthetase family. ProS type 3 subfamily. Homodimer.

The protein resides in the cytoplasm. It catalyses the reaction tRNA(Pro) + L-proline + ATP = L-prolyl-tRNA(Pro) + AMP + diphosphate. Functionally, catalyzes the attachment of proline to tRNA(Pro) in a two-step reaction: proline is first activated by ATP to form Pro-AMP and then transferred to the acceptor end of tRNA(Pro). This Mycoplasma genitalium (strain ATCC 33530 / DSM 19775 / NCTC 10195 / G37) (Mycoplasmoides genitalium) protein is Proline--tRNA ligase.